The chain runs to 406 residues: Tryptophan synthase beta chain (406 aa).

K99 carries the post-translational modification N6-(pyridoxal phosphate)lysine.

The protein belongs to the TrpB family. In terms of assembly, tetramer of two alpha and two beta chains. The cofactor is pyridoxal 5'-phosphate.

The catalysed reaction is (1S,2R)-1-C-(indol-3-yl)glycerol 3-phosphate + L-serine = D-glyceraldehyde 3-phosphate + L-tryptophan + H2O. It participates in amino-acid biosynthesis; L-tryptophan biosynthesis; L-tryptophan from chorismate: step 5/5. Functionally, the beta subunit is responsible for the synthesis of L-tryptophan from indole and L-serine. This Brucella anthropi (strain ATCC 49188 / DSM 6882 / CCUG 24695 / JCM 21032 / LMG 3331 / NBRC 15819 / NCTC 12168 / Alc 37) (Ochrobactrum anthropi) protein is Tryptophan synthase beta chain.